A 161-amino-acid polypeptide reads, in one-letter code: Phosphopantetheine adenylyltransferase (161 aa).

Ser9 serves as a coordination point for substrate. ATP contacts are provided by residues 9–10 and His17; that span reads SF. Residues Lys41, Leu73, and Lys87 each contribute to the substrate site. ATP is bound by residues 88 to 90, Glu98, and 123 to 129; these read GLR and YSYLSSS.

The protein belongs to the bacterial CoaD family. As to quaternary structure, homohexamer. Mg(2+) serves as cofactor.

The protein resides in the cytoplasm. The enzyme catalyses (R)-4'-phosphopantetheine + ATP + H(+) = 3'-dephospho-CoA + diphosphate. It participates in cofactor biosynthesis; coenzyme A biosynthesis; CoA from (R)-pantothenate: step 4/5. In terms of biological role, reversibly transfers an adenylyl group from ATP to 4'-phosphopantetheine, yielding dephospho-CoA (dPCoA) and pyrophosphate. This chain is Phosphopantetheine adenylyltransferase, found in Clostridium novyi (strain NT).